A 133-amino-acid chain; its full sequence is MKQLIIKRLNLLICCLCIVIAYGYYAINDYMHYKDYDVTVVNTLTGTQGKGSSLSFIAVYELKDGYRFSEYISPETYSSIEKGDNITVSLRPFDVKQTWFDNIVWFFGMALVQSICGTYIVCSILFRVIGKIE.

This is an uncharacterized protein from Enterobacteria phage T4 (Bacteriophage T4).